Reading from the N-terminus, the 198-residue chain is Elongation factor Ts (198 aa).

The tract at residues 82 to 85 (TDFV) is involved in Mg(2+) ion dislocation from EF-Tu.

Belongs to the EF-Ts family.

Its subcellular location is the cytoplasm. Functionally, associates with the EF-Tu.GDP complex and induces the exchange of GDP to GTP. It remains bound to the aminoacyl-tRNA.EF-Tu.GTP complex up to the GTP hydrolysis stage on the ribosome. In Oleidesulfovibrio alaskensis (strain ATCC BAA-1058 / DSM 17464 / G20) (Desulfovibrio alaskensis), this protein is Elongation factor Ts.